The primary structure comprises 363 residues: Flagellar P-ring protein (363 aa).

The N-terminal stretch at 1–18 is a signal peptide; the sequence is MWKKVLIAIVFITSFSFA.

Belongs to the FlgI family. In terms of assembly, the basal body constitutes a major portion of the flagellar organelle and consists of four rings (L,P,S, and M) mounted on a central rod.

It localises to the periplasm. The protein resides in the bacterial flagellum basal body. Functionally, assembles around the rod to form the L-ring and probably protects the motor/basal body from shearing forces during rotation. The polypeptide is Flagellar P-ring protein (Sulfurihydrogenibium sp. (strain YO3AOP1)).